Here is a 119-residue protein sequence, read N- to C-terminus: NADH-quinone oxidoreductase subunit A (119 aa).

3 helical membrane passes run 7-27 (FPVLLFIVVGVGLGLALMTIG), 63-83 (LIAILFILFDLETAFLFPWGV), and 88-108 (IGWPGFFAMGVFLLEFLVGFV).

It belongs to the complex I subunit 3 family. NDH-1 is composed of 14 different subunits. Subunits NuoA, H, J, K, L, M, N constitute the membrane sector of the complex.

It is found in the cell inner membrane. The enzyme catalyses a quinone + NADH + 5 H(+)(in) = a quinol + NAD(+) + 4 H(+)(out). Functionally, NDH-1 shuttles electrons from NADH, via FMN and iron-sulfur (Fe-S) centers, to quinones in the respiratory chain. The immediate electron acceptor for the enzyme in this species is believed to be ubiquinone. Couples the redox reaction to proton translocation (for every two electrons transferred, four hydrogen ions are translocated across the cytoplasmic membrane), and thus conserves the redox energy in a proton gradient. The chain is NADH-quinone oxidoreductase subunit A from Ralstonia pickettii (strain 12J).